The primary structure comprises 189 residues: Peptidyl-tRNA hydrolase (189 aa).

Tyr-15 contacts tRNA. The active-site Proton acceptor is the His-20. Residues Phe-66, Asn-68, and Asn-114 each coordinate tRNA.

It belongs to the PTH family. In terms of assembly, monomer.

It is found in the cytoplasm. It carries out the reaction an N-acyl-L-alpha-aminoacyl-tRNA + H2O = an N-acyl-L-amino acid + a tRNA + H(+). Functionally, hydrolyzes ribosome-free peptidyl-tRNAs (with 1 or more amino acids incorporated), which drop off the ribosome during protein synthesis, or as a result of ribosome stalling. Its function is as follows. Catalyzes the release of premature peptidyl moieties from peptidyl-tRNA molecules trapped in stalled 50S ribosomal subunits, and thus maintains levels of free tRNAs and 50S ribosomes. This Streptococcus mutans serotype c (strain ATCC 700610 / UA159) protein is Peptidyl-tRNA hydrolase.